A 183-amino-acid polypeptide reads, in one-letter code: Orotate phosphoribosyltransferase (183 aa).

Residues Arg-100, Lys-101, Lys-104, His-106, and 126-134 (EDVVTTGSS) contribute to the 5-phospho-alpha-D-ribose 1-diphosphate site. 2 residues coordinate orotate: Thr-130 and Arg-158.

It belongs to the purine/pyrimidine phosphoribosyltransferase family. PyrE subfamily. In terms of assembly, homodimer. The cofactor is Mg(2+).

It carries out the reaction orotidine 5'-phosphate + diphosphate = orotate + 5-phospho-alpha-D-ribose 1-diphosphate. Its pathway is pyrimidine metabolism; UMP biosynthesis via de novo pathway; UMP from orotate: step 1/2. Functionally, catalyzes the transfer of a ribosyl phosphate group from 5-phosphoribose 1-diphosphate to orotate, leading to the formation of orotidine monophosphate (OMP). This chain is Orotate phosphoribosyltransferase, found in Aquifex aeolicus (strain VF5).